The following is a 786-amino-acid chain: MTRYKQTEFTEDDSSSIGGIQLNEATGHTGMQIRYHTARATWNWRSRNKTEKWLLITTFVMAITIFTLLIVLFTDGGSSDATKHVLHVQPHQKDCPSGNELPCLNKHCIFASSEILKSIDVTVDPCDDFYGYSCNQWIKNNPIPEGKSTWGTFGKLEQMNQLIIRNVLEKPAKSFKSDAERKAKVYYESCLDADEHMEKLGAKPMNDLLLQIGGWNVTKSGYNVANWTMGHTLKILHNKYNFNCLFGWAIGEDDKNSSRHVIQIDQGGLTLPTADYYNNKTDNHRKVLNEYIEYMTKVCVLLGANESDARAQMIGVINFEKKLANITIPLEDRRNEEAMYHPMQLRQLSKLAPFLNWTDHFDNAMQMVGRRVTDDEVVVVYAPDFLKNLSDIILKMEQTEEGKITLNNYLVWQAVRTLTSCLSKPFRDAYKGVRKALMGSDGGEEIWRYCVSDTNNVVGFAVGAIFVRQAFHGESKPAAEQMIAEIREAFKMNLQNLTWVDKQTREKAIEKANQISDMIGFPDYILDPVELDKKYAELNITPNAYFENNIQVAIYNLKSNLKRLDQPVNKTNWGMTPQTVNAYYTPTKNQIVFPAGILQTPFFDINNPKSLNFGAMGVVMGHELTHAFDDQGREYDKFGNINRWWDSKSIERFNEKSECIARQYSGYKMNGRTLNGKQTLGENIADNGGLKAAYHAYQRTKSDRDVDILKLPGLNLTHSQLFFVSFAQVWCSSTTDETNLLQMEKDPHSPSQFRVIGTLSNMKEFAEVFQCKPGKRMNPTEKCEVW.

The Cytoplasmic segment spans residues 1-52 (MTRYKQTEFTEDDSSSIGGIQLNEATGHTGMQIRYHTARATWNWRSRNKTEK). The chain crosses the membrane as a helical; Signal-anchor for type II membrane protein span at residues 53-73 (WLLITTFVMAITIFTLLIVLF). Over 74-786 (TDGGSSDATK…MNPTEKCEVW (713 aa)) the chain is Extracellular. One can recognise a Peptidase M13 domain in the interval 102–786 (PCLNKHCIFA…MNPTEKCEVW (685 aa)). 5 cysteine pairs are disulfide-bonded: Cys-103-Cys-108, Cys-126-Cys-771, Cys-134-Cys-731, Cys-190-Cys-450, and Cys-659-Cys-783. Asn-216, Asn-226, Asn-256, Asn-279, Asn-305, Asn-325, Asn-356, Asn-388, Asn-496, and Asn-569 each carry an N-linked (GlcNAc...) asparagine glycan. Position 622 (His-622) interacts with Zn(2+). The active site involves Glu-623. 2 residues coordinate Zn(2+): His-626 and Glu-682. The active-site Proton donor is Asp-686. Asn-715 carries an N-linked (GlcNAc...) asparagine glycan.

This sequence belongs to the peptidase M13 family. It depends on Zn(2+) as a cofactor.

It is found in the cell membrane. The catalysed reaction is Preferential cleavage of polypeptides between hydrophobic residues, particularly with Phe or Tyr at P1'.. In terms of biological role, metalloendoprotease which is required in the dorsal paired medial neurons for the proper formation of long-term (LTM) and middle-term memories (MTM). Also required in the mushroom body neurons where it functions redundantly with neprilysins Nep2 and Nep4 in normal LTM formation. The polypeptide is Neprilysin-3 (Drosophila melanogaster (Fruit fly)).